The primary structure comprises 2542 residues: Highly reducing polyketide synthase (2542 aa).

The region spanning 7–435 (PEPIAIVGMA…GANAHAILDA (429 aa)) is the Ketosynthase family 3 (KS3) domain. Active-site for beta-ketoacyl synthase activity residues include cysteine 182, histidine 317, and histidine 357. A Malonyl-CoA:ACP transacylase (MAT) domain is found at 545-872 (FVFTGQGAQW…NLVGSLFLSG (328 aa)). An N-terminal hotdog fold region spans residues 927–1062 (HDLLGSRIPG…TTNETLRINS (136 aa)). Residues 927 to 1224 (HDLLGSRIPG…FLSLETATKE (298 aa)) form the PKS/mFAS DH domain. The active-site Proton acceptor; for dehydratase activity is the histidine 959. Positions 1072–1224 (NKDSYVRRWY…FLSLETATKE (153 aa)) are C-terminal hotdog fold. The active-site Proton donor; for dehydratase activity is the aspartate 1137. Residues 1275–1574 (LTQLAIRSVV…AGADIMLDDY (300 aa)) are methyltransferase (CMet) domain. The disordered stretch occupies residues 1606–1634 (VNGTNGINSTNSVNVTNDTSGINDTNRMN). The region spanning 1866 to 2186 (GKANSFYFES…QGDSVGSVVL (321 aa)) is the Enoyl reductase (ER) domain. The region spanning 2209-2389 (ASYLLVGCLG…QAMSMALGMI (181 aa)) is the Ketoreductase (KR) domain.

Pantetheine 4'-phosphate serves as cofactor.

It participates in antifungal biosynthesis. In terms of biological role, highly reducing polyketide synthase; part of the gene cluster that mediates the biosynthesis of the tetrahydropyranyl antifungal agent lanomycin that acts as an inhibitor of CYP51 and blocks the ergosterol biosynthesis. The biosynthesis probably begins with the formation of an hexaketide, followed by methionine mediated alkylation of C-2 and C-6, and methylation of the reduced C-3 oxygen, pyran forming reductive ring closure, oxygenation of C-4, beta-keto reduction, enoyl reduction and dehydration of the remaining oxygens, and finally, acylation with glycine to complete the biosynthesis. In Pyrenophora dematioidea (Helminthosporium dematioideum), this protein is Highly reducing polyketide synthase.